The chain runs to 209 residues: Imidazole glycerol phosphate synthase subunit HisH (209 aa).

The Glutamine amidotransferase type-1 domain occupies 3–209; the sequence is SVAVIDYGMG…ANFLTWNGVS (207 aa). Cys82 functions as the Nucleophile in the catalytic mechanism. Residues His187 and Glu189 contribute to the active site.

Heterodimer of HisH and HisF.

It localises to the cytoplasm. It catalyses the reaction 5-[(5-phospho-1-deoxy-D-ribulos-1-ylimino)methylamino]-1-(5-phospho-beta-D-ribosyl)imidazole-4-carboxamide + L-glutamine = D-erythro-1-(imidazol-4-yl)glycerol 3-phosphate + 5-amino-1-(5-phospho-beta-D-ribosyl)imidazole-4-carboxamide + L-glutamate + H(+). It carries out the reaction L-glutamine + H2O = L-glutamate + NH4(+). Its pathway is amino-acid biosynthesis; L-histidine biosynthesis; L-histidine from 5-phospho-alpha-D-ribose 1-diphosphate: step 5/9. Functionally, IGPS catalyzes the conversion of PRFAR and glutamine to IGP, AICAR and glutamate. The HisH subunit catalyzes the hydrolysis of glutamine to glutamate and ammonia as part of the synthesis of IGP and AICAR. The resulting ammonia molecule is channeled to the active site of HisF. The polypeptide is Imidazole glycerol phosphate synthase subunit HisH (Nitrosococcus oceani (strain ATCC 19707 / BCRC 17464 / JCM 30415 / NCIMB 11848 / C-107)).